The chain runs to 419 residues: Phosphoglycerate kinase (419 aa).

Substrate contacts are provided by residues 21–23, R36, 60–63, R137, and R174; these read DFN and HLGD. ATP is bound by residues K225, G316, E347, and 376 to 379; that span reads GGDS.

Belongs to the phosphoglycerate kinase family. As to quaternary structure, monomer.

It is found in the cytoplasm. It catalyses the reaction (2R)-3-phosphoglycerate + ATP = (2R)-3-phospho-glyceroyl phosphate + ADP. The protein operates within carbohydrate degradation; glycolysis; pyruvate from D-glyceraldehyde 3-phosphate: step 2/5. The chain is Phosphoglycerate kinase (pgk) from Treponema pallidum (strain Nichols).